Reading from the N-terminus, the 369-residue chain is Dual-specificity RNA methyltransferase RlmN (369 aa).

The Proton acceptor role is filled by E96. Residues 102–338 (DGERGTLCVS…VTTIRTTRGD (237 aa)) enclose the Radical SAM core domain. A disulfide bridge connects residues C109 and C344. The [4Fe-4S] cluster site is built by C116, C120, and C123. S-adenosyl-L-methionine-binding positions include 169–170 (GE), S201, 223–225 (SLH), and N301. The active-site S-methylcysteine intermediate is C344.

This sequence belongs to the radical SAM superfamily. RlmN family. It depends on [4Fe-4S] cluster as a cofactor.

Its subcellular location is the cytoplasm. The enzyme catalyses adenosine(2503) in 23S rRNA + 2 reduced [2Fe-2S]-[ferredoxin] + 2 S-adenosyl-L-methionine = 2-methyladenosine(2503) in 23S rRNA + 5'-deoxyadenosine + L-methionine + 2 oxidized [2Fe-2S]-[ferredoxin] + S-adenosyl-L-homocysteine. It carries out the reaction adenosine(37) in tRNA + 2 reduced [2Fe-2S]-[ferredoxin] + 2 S-adenosyl-L-methionine = 2-methyladenosine(37) in tRNA + 5'-deoxyadenosine + L-methionine + 2 oxidized [2Fe-2S]-[ferredoxin] + S-adenosyl-L-homocysteine. Functionally, specifically methylates position 2 of adenine 2503 in 23S rRNA and position 2 of adenine 37 in tRNAs. m2A2503 modification seems to play a crucial role in the proofreading step occurring at the peptidyl transferase center and thus would serve to optimize ribosomal fidelity. The polypeptide is Dual-specificity RNA methyltransferase RlmN (Marinobacter nauticus (strain ATCC 700491 / DSM 11845 / VT8) (Marinobacter aquaeolei)).